A 237-amino-acid polypeptide reads, in one-letter code: Purine nucleoside phosphorylase DeoD-type (237 aa).

H4 lines the a purine D-ribonucleoside pocket. Phosphate-binding positions include G20, R24, R43, and 87–90 (RVGT). Residues 179 to 181 (EME) and 203 to 204 (SD) contribute to the a purine D-ribonucleoside site. The active-site Proton donor is the D204.

It belongs to the PNP/UDP phosphorylase family. In terms of assembly, homohexamer; trimer of homodimers.

The catalysed reaction is a purine D-ribonucleoside + phosphate = a purine nucleobase + alpha-D-ribose 1-phosphate. It catalyses the reaction a purine 2'-deoxy-D-ribonucleoside + phosphate = a purine nucleobase + 2-deoxy-alpha-D-ribose 1-phosphate. Its function is as follows. Catalyzes the reversible phosphorolytic breakdown of the N-glycosidic bond in the beta-(deoxy)ribonucleoside molecules, with the formation of the corresponding free purine bases and pentose-1-phosphate. The sequence is that of Purine nucleoside phosphorylase DeoD-type from Clostridium beijerinckii (strain ATCC 51743 / NCIMB 8052) (Clostridium acetobutylicum).